A 326-amino-acid chain; its full sequence is MRVTAILTLATIAIASPTKVLNSRNELARRQATEGCSIGYCTQNGGTTGGAAGDTVTVTDLASLTEAAESETPLTIIVSGNIEGSAKIRVASDKTIYGETGSSITGVGFYIRQVSNVIMRNLKIGQVLADNGDAIGIDESTNVWVDHCDLSGDLSAGKDDLDGLLDITHAAEWVTVSNTYLHDHWKASLVGHSDSNADEDTGHLHITYANNYWYNINSRAPSIRFGTVHIINNYWDSLLGTGVNCRMDAQVLIQSSAFSNCPDEAIFFADSDYTGYAVVDDVDLGGSTNSVPEGTLTASSLPYDAIEALGSAQIAATIPETAGQKL.

The signal sequence occupies residues 1 to 15 (MRVTAILTLATIAIA). Residues Asp133, Asp162, and Asp166 each coordinate Ca(2+). Arg219 is an active-site residue.

This sequence belongs to the polysaccharide lyase 1 family. It depends on Ca(2+) as a cofactor.

The protein localises to the secreted. It carries out the reaction Eliminative cleavage of (1-&gt;4)-alpha-D-galacturonan to give oligosaccharides with 4-deoxy-alpha-D-galact-4-enuronosyl groups at their non-reducing ends.. Its function is as follows. Pectinolytic enzyme consist of four classes of enzymes: pectin lyase, polygalacturonase, pectin methylesterase and rhamnogalacturonase. Among pectinolytic enzymes, pectin lyase is the most important in depolymerization of pectin, since it cleaves internal glycosidic bonds of highly methylated pectins. Favors pectate, the anion, over pectin, the methyl ester. This chain is Probable pectate lyase B (plyB), found in Aspergillus flavus (strain ATCC 200026 / FGSC A1120 / IAM 13836 / NRRL 3357 / JCM 12722 / SRRC 167).